Here is a 340-residue protein sequence, read N- to C-terminus: uncharacterized protein (340 aa).

It localises to the virion. This is an uncharacterized protein from Acanthamoeba polyphaga (Amoeba).